The sequence spans 833 residues: Bifunctional dethiobiotin synthetase/7,8-diamino-pelargonic acid aminotransferase, mitochondrial (833 aa).

The N-terminal 23 residues, 1–23, are a transit peptide targeting the mitochondrion; the sequence is MIPVTATLIRHRLRHLRHRIRFK. The segment at 36-299 is dethiobiotin synthetase; it reads HPTYLIWSAN…VLVLPPVPKD (264 aa). Residue 47–52 participates in ATP binding; that stretch reads SLGKTL. Thr51 contacts Mg(2+). Thr81 is a binding site for substrate. Asp88 provides a ligand contact to Mg(2+). Residues Asp97, 210–213, and 270–271 each bind ATP; these read ETAG and ED. Residue Glu210 participates in Mg(2+) binding. Residues 332–830 are 7,8-diamino-pelargonic acid aminotransferase; that stretch reads RLNGMAKLAG…TKLYKRLGEF (499 aa). A (8S)-8-amino-7-oxononanoate-binding site is contributed by 391-392; the sequence is WW. 453–454 contacts pyridoxal 5'-phosphate; it reads GS. A (8S)-8-amino-7-oxononanoate-binding site is contributed by Tyr495. Residues 518 to 520 and Glu545 each bind ATP; that span reads PWY. Position 637 (Asp637) interacts with pyridoxal 5'-phosphate. Residues Lys666 and Gly700 each contribute to the (8S)-8-amino-7-oxononanoate site. Lys666 bears the N6-(pyridoxal phosphate)lysine mark. 701–702 provides a ligand contact to pyridoxal 5'-phosphate; the sequence is HS. (8S)-8-amino-7-oxononanoate is bound at residue Arg797.

It in the N-terminal section; belongs to the dethiobiotin synthetase family. In the C-terminal section; belongs to the class-III pyridoxal-phosphate-dependent aminotransferase family. BioA subfamily. As to quaternary structure, homodimer. Mg(2+) serves as cofactor. It depends on pyridoxal 5'-phosphate as a cofactor.

It is found in the mitochondrion matrix. The catalysed reaction is (7R,8S)-7,8-diammoniononanoate + CO2 + ATP = (4R,5S)-dethiobiotin + ADP + phosphate + 3 H(+). The enzyme catalyses (8S)-8-amino-7-oxononanoate + S-adenosyl-L-methionine = S-adenosyl-4-methylsulfanyl-2-oxobutanoate + (7R,8S)-7,8-diammoniononanoate. Its pathway is cofactor biosynthesis; biotin biosynthesis; biotin from 7,8-diaminononanoate: step 1/2. It participates in cofactor biosynthesis; biotin biosynthesis; 7,8-diaminononanoate from 8-amino-7-oxononanoate (SAM route): step 1/1. Bifunctional enzyme that catalyzes two different reactions involved in the biotin biosynthesis. Its function is as follows. Catalyzes a mechanistically unusual reaction, the ATP-dependent insertion of CO2 between the N7 and N8 nitrogen atoms of 7,8-diaminopelargonic acid (DAPA) to form an ureido ring. In terms of biological role, catalyzes the transfer of the alpha-amino group from S-adenosyl-L-methionine (SAM) to 7-keto-8-aminopelargonic acid (KAPA) to form 7,8-diaminopelargonic acid (DAPA). It is the only aminotransferase known to utilize SAM as an amino donor. This is Bifunctional dethiobiotin synthetase/7,8-diamino-pelargonic acid aminotransferase, mitochondrial from Arabidopsis thaliana (Mouse-ear cress).